Reading from the N-terminus, the 140-residue chain is MITLNQIKDRKARGSKKKRKTLLTGYPQKKGFCVKVYVTKPKKPNSAIRKVAKVTIRLKNKRKNLIAYIPGFGPHNLQPLSTVLIKGGRCQDLPGVKYRLVRKHYDFQIAERFPRKNRRSKFSVKNEKLKAKKGTAVRIG.

It belongs to the universal ribosomal protein uS12 family.

It localises to the mitochondrion. The chain is Small ribosomal subunit protein uS12m (mrps12) from Dictyostelium citrinum (Slime mold).